The primary structure comprises 78 residues: Large ribosomal subunit protein bL28 (78 aa).

Residues 1-22 (MAKVCQVTGKRPVTGHNVSHAK) are disordered.

This sequence belongs to the bacterial ribosomal protein bL28 family.

This Saccharophagus degradans (strain 2-40 / ATCC 43961 / DSM 17024) protein is Large ribosomal subunit protein bL28.